The sequence spans 859 residues: Protein translocase subunit SecA (859 aa).

ATP is bound by residues Gln88, 106–110, and Asp496; that span reads GEGKT. Residues 818–838 form a disordered region; it reads FSHQPQSEVKVSRNDPCPCGS. Cys834, Cys836, Cys845, and Cys846 together coordinate Zn(2+).

It belongs to the SecA family. As to quaternary structure, monomer and homodimer. Part of the essential Sec protein translocation apparatus which comprises SecA, SecYEG and auxiliary proteins SecDF-YajC and YidC. Zn(2+) serves as cofactor.

The protein resides in the cell inner membrane. It localises to the cytoplasm. It carries out the reaction ATP + H2O + cellular proteinSide 1 = ADP + phosphate + cellular proteinSide 2.. In terms of biological role, part of the Sec protein translocase complex. Interacts with the SecYEG preprotein conducting channel. Has a central role in coupling the hydrolysis of ATP to the transfer of proteins into and across the cell membrane, serving as an ATP-driven molecular motor driving the stepwise translocation of polypeptide chains across the membrane. The polypeptide is Protein translocase subunit SecA (Wolinella succinogenes (strain ATCC 29543 / DSM 1740 / CCUG 13145 / JCM 31913 / LMG 7466 / NCTC 11488 / FDC 602W) (Vibrio succinogenes)).